We begin with the raw amino-acid sequence, 455 residues long: Keratin, type I cuticular Ha5 (455 aa).

The interval 1-97 is head; the sequence is MASKCLKAGF…FGEGILTGNE (97 aa). Residues 97–408 enclose the IF rod domain; the sequence is EKETMQSLND…GLLESEDSKL (312 aa). The interval 98-132 is coil 1A; it reads KETMQSLNDRLAGYLEKVRQLEQENASLESRIREW. The linker 1 stretch occupies residues 133–143; the sequence is CEQQVPYMCPD. The interval 144 to 244 is coil 1B; that stretch reads YQSYFRTIEE…HEEEVNSLRC (101 aa). The linker 12 stretch occupies residues 245 to 260; sequence QLGDRLNVEVDAAPPV. Residues 261-404 form a coil 2 region; the sequence is DLNRVLEEMR…NTYRGLLESE (144 aa). The tail stretch occupies residues 405 to 455; the sequence is DSKLPCNPCAPDYSPSKSCLPCLPAASCGPSAARTNCSPRPICVPCPGGRF.

It belongs to the intermediate filament family. Early expression in the hair follicle, mainly found in supramatricial cells and lowermost cortical cells of the hair bulb.

The polypeptide is Keratin, type I cuticular Ha5 (KRT35) (Homo sapiens (Human)).